Reading from the N-terminus, the 227-residue chain is PKHD-type hydroxylase Bamb_4192 (227 aa).

Residues 78–178 enclose the Fe2OG dioxygenase domain; it reads KVFPPLFNRY…RVASFFWIQS (101 aa). Residues His-96, Asp-98, and His-159 each coordinate Fe cation. 2-oxoglutarate is bound at residue Arg-169.

Requires Fe(2+) as cofactor. The cofactor is L-ascorbate.

The protein is PKHD-type hydroxylase Bamb_4192 of Burkholderia ambifaria (strain ATCC BAA-244 / DSM 16087 / CCUG 44356 / LMG 19182 / AMMD) (Burkholderia cepacia (strain AMMD)).